A 340-amino-acid polypeptide reads, in one-letter code: Adenosine kinase (340 aa).

Aspartate 293 is a catalytic residue.

It belongs to the carbohydrate kinase PfkB family. In terms of assembly, monomer. The cofactor is Mg(2+).

The enzyme catalyses adenosine + ATP = AMP + ADP + H(+). The protein operates within purine metabolism; AMP biosynthesis via salvage pathway; AMP from adenosine: step 1/1. Its function is as follows. ATP dependent phosphorylation of adenosine and other related nucleoside analogs to monophosphate derivatives. The protein is Adenosine kinase (adk) of Dictyostelium discoideum (Social amoeba).